The sequence spans 287 residues: Phosphoribosylaminoimidazole-succinocarboxamide synthase (287 aa).

It belongs to the SAICAR synthetase family.

It catalyses the reaction 5-amino-1-(5-phospho-D-ribosyl)imidazole-4-carboxylate + L-aspartate + ATP = (2S)-2-[5-amino-1-(5-phospho-beta-D-ribosyl)imidazole-4-carboxamido]succinate + ADP + phosphate + 2 H(+). The protein operates within purine metabolism; IMP biosynthesis via de novo pathway; 5-amino-1-(5-phospho-D-ribosyl)imidazole-4-carboxamide from 5-amino-1-(5-phospho-D-ribosyl)imidazole-4-carboxylate: step 1/2. This is Phosphoribosylaminoimidazole-succinocarboxamide synthase from Neisseria meningitidis serogroup C (strain 053442).